Consider the following 54-residue polypeptide: Large ribosomal subunit protein bL33 (54 aa).

The protein belongs to the bacterial ribosomal protein bL33 family.

This chain is Large ribosomal subunit protein bL33, found in Herpetosiphon aurantiacus (strain ATCC 23779 / DSM 785 / 114-95).